Reading from the N-terminus, the 449-residue chain is Protein adenylyltransferase FICD (449 aa).

The chain crosses the membrane as a helical span at residues 15–35; sequence LLWGWGPILFGLLGSVFVLLL. TPR repeat units lie at residues 96–129 and 130–163; these read AKAALQQALEMKKSGKREKAHKLLVHALNMNPEF and VEALTELGTILEEEKDVVQADHLYTKALAISPCH. Positions 220-225 match the Inhibitory (S/T)XXXE(G/N) motif motif; it reads TVAIEG. ATP contacts are provided by residues E224, 250–251, 358–360, and R364; these read EQ and GNG. The 136-residue stretch at 275–410 folds into the Fido domain; the sequence is ITVNDILEIH…VRPFIRFIAK (136 aa).

It belongs to the fic family.

The protein resides in the membrane. It catalyses the reaction L-tyrosyl-[protein] + ATP = O-(5'-adenylyl)-L-tyrosyl-[protein] + diphosphate. It carries out the reaction L-threonyl-[protein] + ATP = 3-O-(5'-adenylyl)-L-threonyl-[protein] + diphosphate. With respect to regulation, adenylyltransferase activity is inhibited by the inhibitory helix present at the N-terminus: Glu-224 binds ATP and competes with ATP-binding at Arg-364, thereby preventing adenylyltransferase activity. Activation dissociates ATP-binding from Glu-224, allowing ordered binding of the entire ATP moiety with the alpha-phosphate in an orientation that is productive for accepting an incoming target hydroxyl side chain. In terms of biological role, adenylyltransferase that mediates the addition of adenosine 5'-monophosphate (AMP) to specific residues of target proteins. The polypeptide is Protein adenylyltransferase FICD (ficd) (Danio rerio (Zebrafish)).